We begin with the raw amino-acid sequence, 337 residues long: Holliday junction branch migration complex subunit RuvB (337 aa).

Residues 1-179 (MTHQVSVLHQ…FSFTGRVAYY (179 aa)) form a large ATPase domain (RuvB-L) region. ATP is bound by residues Leu-18, Arg-19, Gly-60, Lys-63, Thr-64, Ser-65, 126 to 128 (EDY), Arg-169, Tyr-179, and Arg-216. Thr-64 contacts Mg(2+). The small ATPAse domain (RuvB-S) stretch occupies residues 180–250 (SDEDLATILR…VAEKALAMLL (71 aa)). The segment at 253 to 337 (EWGLNEIDIK…DNLQSLGEEK (85 aa)) is head domain (RuvB-H). The DNA site is built by Lys-308 and Arg-313.

The protein belongs to the RuvB family. Homohexamer. Forms an RuvA(8)-RuvB(12)-Holliday junction (HJ) complex. HJ DNA is sandwiched between 2 RuvA tetramers; dsDNA enters through RuvA and exits via RuvB. An RuvB hexamer assembles on each DNA strand where it exits the tetramer. Each RuvB hexamer is contacted by two RuvA subunits (via domain III) on 2 adjacent RuvB subunits; this complex drives branch migration. In the full resolvosome a probable DNA-RuvA(4)-RuvB(12)-RuvC(2) complex forms which resolves the HJ.

The protein resides in the cytoplasm. It catalyses the reaction ATP + H2O = ADP + phosphate + H(+). The RuvA-RuvB-RuvC complex processes Holliday junction (HJ) DNA during genetic recombination and DNA repair, while the RuvA-RuvB complex plays an important role in the rescue of blocked DNA replication forks via replication fork reversal (RFR). RuvA specifically binds to HJ cruciform DNA, conferring on it an open structure. The RuvB hexamer acts as an ATP-dependent pump, pulling dsDNA into and through the RuvAB complex. RuvB forms 2 homohexamers on either side of HJ DNA bound by 1 or 2 RuvA tetramers; 4 subunits per hexamer contact DNA at a time. Coordinated motions by a converter formed by DNA-disengaged RuvB subunits stimulates ATP hydrolysis and nucleotide exchange. Immobilization of the converter enables RuvB to convert the ATP-contained energy into a lever motion, pulling 2 nucleotides of DNA out of the RuvA tetramer per ATP hydrolyzed, thus driving DNA branch migration. The RuvB motors rotate together with the DNA substrate, which together with the progressing nucleotide cycle form the mechanistic basis for DNA recombination by continuous HJ branch migration. Branch migration allows RuvC to scan DNA until it finds its consensus sequence, where it cleaves and resolves cruciform DNA. This chain is Holliday junction branch migration complex subunit RuvB, found in Chlamydia abortus (strain DSM 27085 / S26/3) (Chlamydophila abortus).